Reading from the N-terminus, the 487-residue chain is GTPase Der (487 aa).

EngA-type G domains lie at 3 to 167 (FTLA…EGFA) and 203 to 378 (LQIA…DIWN). Residues 9-16 (GRPNVGKS), 56-60 (DTAGL), 119-122 (NKAE), 209-216 (GRPNAGKS), 256-260 (DTAGM), and 321-324 (NKWD) contribute to the GTP site. Residues 379 to 463 (RRITTARLNT…PIRLTMRGQG (85 aa)) form the KH-like domain. The interval 451-487 (PGTPIRLTMRGQGDKNPFKERKFRTPSRLRKHLGKKD) is disordered. The span at 471-487 (RKFRTPSRLRKHLGKKD) shows a compositional bias: basic residues.

Belongs to the TRAFAC class TrmE-Era-EngA-EngB-Septin-like GTPase superfamily. EngA (Der) GTPase family. As to quaternary structure, associates with the 50S ribosomal subunit.

In terms of biological role, GTPase that plays an essential role in the late steps of ribosome biogenesis. The sequence is that of GTPase Der from Cereibacter sphaeroides (strain ATCC 17029 / ATH 2.4.9) (Rhodobacter sphaeroides).